A 706-amino-acid polypeptide reads, in one-letter code: Protein kinase C theta type (706 aa).

Positions 1–107 constitute a C2 domain; that stretch reads MSPFLRIGLS…KNNGKTEIWL (107 aa). A Phosphotyrosine; by LCK modification is found at Y90. The Phorbol-ester/DAG-type 1 zinc finger occupies 159–209; that stretch reads CHEFTATFFPQPTFCSVCHEFVWGLNKQGYQCRQCNAAIHKKCIDKVIAKC. A Phosphothreonine; by autocatalysis modification is found at T219. A Phorbol-ester/DAG-type 2 zinc finger spans residues 231–281; that stretch reads PHRFKVYNYKSPTFCEHCGTLLWGLARQGLKCDACGMNVHHRCQTKVANLC. A Phosphoserine modification is found at S348. In terms of domain architecture, Protein kinase spans 380-634; sequence FILHKMLGKG…RGDIRQHPLF (255 aa). Residues 386-394 and K409 contribute to the ATP site; that span reads LGKGSFGKV. Catalysis depends on D504, which acts as the Proton acceptor. At T538 the chain carries Phosphothreonine; by PDPK1. The 72-residue stretch at 635 to 706 folds into the AGC-kinase C-terminal domain; the sequence is REINWEELER…MNPGMERLIS (72 aa). Residues S676, S685, and S695 each carry the phosphoserine modification.

This sequence belongs to the protein kinase superfamily. AGC Ser/Thr protein kinase family. PKC subfamily. Part of a lipid raft complex composed at least of BCL10, CARD11, MALT1 and IKBKB. Interacts with GLRX3 (via N-terminus). Interacts with ECT2. Interacts with CCDC88A/GIV; the interaction leads to phosphorylation of CCDC88A and inhibition of its guanine nucleotide exchange factor activity. Interacts with PRKCH upstream open reading frame 2; the interaction leads to inhibition of kinase activity. Interacts with CD28. Mg(2+) is required as a cofactor. Post-translationally, autophosphorylation at Thr-219 is required for targeting to the TCR and cellular function of PRKCQ upon antigen receptor ligation. Following TCR stimulation, phosphorylated at Tyr-90 and Ser-685. In terms of tissue distribution, expressed in skeletal muscle, T-cells, megakaryoblastic cells and platelets.

The protein localises to the cytoplasm. It localises to the cell membrane. The enzyme catalyses L-seryl-[protein] + ATP = O-phospho-L-seryl-[protein] + ADP + H(+). The catalysed reaction is L-threonyl-[protein] + ATP = O-phospho-L-threonyl-[protein] + ADP + H(+). With respect to regulation, novel PKCs (PRKCD, PRKCE, PRKCH and PRKCQ) are calcium-insensitive, but activated by diacylglycerol (DAG) and phosphatidylserine. Three specific sites; Thr-538 (activation loop of the kinase domain), Ser-676 (turn motif) and Ser-695 (hydrophobic region), need to be phosphorylated for its full activation. Inhibited by PRKCH upstream open reading frame 2. In terms of biological role, calcium-independent, phospholipid- and diacylglycerol (DAG)-dependent serine/threonine-protein kinase that mediates non-redundant functions in T-cell receptor (TCR) signaling, including T-cells activation, proliferation, differentiation and survival, by mediating activation of multiple transcription factors such as NF-kappa-B, JUN, NFATC1 and NFATC2. In TCR-CD3/CD28-co-stimulated T-cells, is required for the activation of NF-kappa-B and JUN, which in turn are essential for IL2 production, and participates in the calcium-dependent NFATC1 and NFATC2 transactivation. Mediates the activation of the canonical NF-kappa-B pathway (NFKB1) by direct phosphorylation of CARD11 on several serine residues, inducing CARD11 association with lipid rafts and recruitment of the BCL10-MALT1 complex, which then activates IKK complex, resulting in nuclear translocation and activation of NFKB1. May also play an indirect role in activation of the non-canonical NF-kappa-B (NFKB2) pathway. In the signaling pathway leading to JUN activation, acts by phosphorylating the mediator STK39/SPAK and may not act through MAP kinases signaling. Plays a critical role in TCR/CD28-induced NFATC1 and NFATC2 transactivation by participating in the regulation of reduced inositol 1,4,5-trisphosphate generation and intracellular calcium mobilization. After costimulation of T-cells through CD28 can phosphorylate CBLB and is required for the ubiquitination and subsequent degradation of CBLB, which is a prerequisite for the activation of TCR. During T-cells differentiation, plays an important role in the development of T-helper 2 (Th2) cells following immune and inflammatory responses, and, in the development of inflammatory autoimmune diseases, is necessary for the activation of IL17-producing Th17 cells. May play a minor role in Th1 response. Upon TCR stimulation, mediates T-cell protective survival signal by phosphorylating BAD, thus protecting T-cells from BAD-induced apoptosis, and by up-regulating BCL-X(L)/BCL2L1 levels through NF-kappa-B and JUN pathways. In platelets, regulates signal transduction downstream of the ITGA2B, CD36/GP4, F2R/PAR1 and F2RL3/PAR4 receptors, playing a positive role in 'outside-in' signaling and granule secretion signal transduction. May relay signals from the activated ITGA2B receptor by regulating the uncoupling of WASP and WIPF1, thereby permitting the regulation of actin filament nucleation and branching activity of the Arp2/3 complex. May mediate inhibitory effects of free fatty acids on insulin signaling by phosphorylating IRS1, which in turn blocks IRS1 tyrosine phosphorylation and downstream activation of the PI3K/AKT pathway. Phosphorylates MSN (moesin) in the presence of phosphatidylglycerol or phosphatidylinositol. Phosphorylates PDPK1 at 'Ser-504' and 'Ser-532' and negatively regulates its ability to phosphorylate PKB/AKT1. Phosphorylates CCDC88A/GIV and inhibits its guanine nucleotide exchange factor activity. Phosphorylates and activates LRRK1, which phosphorylates RAB proteins involved in intracellular trafficking. The polypeptide is Protein kinase C theta type (PRKCQ) (Homo sapiens (Human)).